Reading from the N-terminus, the 262-residue chain is MNDEISDLINQAVSNILINSSSENKLKKLIKTHDVKIHFVPRNYRIFGGILQSMNIQFGNFLEEFMTLLIKSDGRYDILEEYSGKKSNKFQLSTSNDNRIDQFISFCQRSDSINLDEEFPKLLNEVKNDNDTNLSSISHDIDILFRNKETGVIYYLEVKYNDDHDTGKFVDINRKFIKTYAYLVREFPNTEIKPILFFFNNKKMKGNIYVPENTNIRRGKSFFDEFLKIKYEDVDSYIRNLSESPDNIKAFDDLYRKIMAMK.

It carries out the reaction Endonucleolytic cleavage of DNA to give specific double-stranded fragments with terminal 5'-phosphates.. A P subtype restriction enzyme that recognizes the double-stranded sequence 5'-GANTC-3' and cleaves after G-1. The protein is Type II restriction enzyme HinfI (hinfIR) of Haemophilus influenzae.